The following is a 257-amino-acid chain: S-methyl-5'-thioadenosine phosphorylase (257 aa).

Residues S10 and 50–51 each bind phosphate; that span reads RH. M180 contacts substrate. T181 contributes to the phosphate binding site. 204–206 serves as a coordination point for substrate; sequence DYD.

This sequence belongs to the PNP/MTAP phosphorylase family. MTAP subfamily. In terms of assembly, homohexamer. Dimer of a homotrimer.

The enzyme catalyses S-methyl-5'-thioadenosine + phosphate = 5-(methylsulfanyl)-alpha-D-ribose 1-phosphate + adenine. It participates in amino-acid biosynthesis; L-methionine biosynthesis via salvage pathway; S-methyl-5-thio-alpha-D-ribose 1-phosphate from S-methyl-5'-thioadenosine (phosphorylase route): step 1/1. Functionally, catalyzes the reversible phosphorylation of S-methyl-5'-thioadenosine (MTA) to adenine and 5-methylthioribose-1-phosphate. Involved in the breakdown of MTA, a major by-product of polyamine biosynthesis. Responsible for the first step in the methionine salvage pathway after MTA has been generated from S-adenosylmethionine. Has broad substrate specificity with 6-aminopurine nucleosides as preferred substrates. This Pyrococcus abyssi (strain GE5 / Orsay) protein is S-methyl-5'-thioadenosine phosphorylase (mntP).